Here is a 115-residue protein sequence, read N- to C-terminus: Large ribosomal subunit protein bL20c (115 aa).

It belongs to the bacterial ribosomal protein bL20 family.

The protein resides in the plastid. It is found in the chloroplast. Its function is as follows. Binds directly to 23S ribosomal RNA and is necessary for the in vitro assembly process of the 50S ribosomal subunit. It is not involved in the protein synthesizing functions of that subunit. The polypeptide is Large ribosomal subunit protein bL20c (Chaetosphaeridium globosum (Charophycean green alga)).